The primary structure comprises 522 residues: Berberine bridge enzyme-like Cyn d 4 (522 aa).

Positions 1–25 are cleaved as a signal peptide; the sequence is MARSRAFAFALLICAVAASCHVALS. Cys41 and Cys98 are joined by a disulfide. The FAD-binding PCMH-type domain occupies 76-252; that stretch reads KTVKPLYIIT…ASWQVKLLPV (177 aa). N-linked (GlcNAc...) asparagine glycosylation is present at Asn88. FAD contacts are provided by residues 108 to 114, Ser119, Ser152, 176 to 177, 181 to 185, Phe191, Glu237, and Val242; these read VRSGGHD, VC, and GVGGH. Positions 113–177 form a cross-link, 6-(S-cysteinyl)-8alpha-(pros-histidyl)-FAD (His-Cys); the sequence is HDYEGLSYRS…PKLGFPAGVC (65 aa). The cysteines at positions 308 and 329 are disulfide-linked. N-linked (GlcNAc...) asparagine glycans are attached at residues Asn325 and Asn354. 461–465 contacts FAD; that stretch reads YVNYR. Asn477 carries an N-linked (GlcNAc...) asparagine glycan.

This sequence belongs to the oxygen-dependent FAD-linked oxidoreductase family. As to quaternary structure, monomer. The cofactor is FAD. The FAD cofactor is bound via a bicovalent 6-S-cysteinyl, 8alpha-N1-histidyl FAD linkage. Post-translationally, the N-terminus is blocked. In terms of processing, glycosylated. N-glycosylated. Contains fucose, N-acetylglucosamine, and mannose as main carbohydrates (in a ratio of approximately 3:2:1), and a minute amount of xylose. The two most abundant oligosaccharides are Fuc(1)GlcNAc(2)Man(3) and Fuc(1)GlcNAc(2)Man(2), together comprising about 80% of the total carbohydrate content. They are structurally unusual in having a L-Fuc alpha-(1,3)-linked to Asn-linked GlcNAc without a Xyl beta-(1,2)-linked to the branching Man. The other oligosaccharides make up only 9% of the total carbohydrate content and are characterized by the presence of Xyl beta-(1,2)-linked to the branching Man. Expressed in pollen (at protein level).

The chain is Berberine bridge enzyme-like Cyn d 4 from Cynodon dactylon (Bermuda grass).